Reading from the N-terminus, the 1123-residue chain is Translation initiation factor IF-2 (1123 aa).

2 disordered regions span residues 52 to 452 (LLKA…KVHI) and 480 to 512 (LARP…RQRQ). 3 stretches are compositionally biased toward low complexity: residues 54-73 (KAGS…PGKA), 94-113 (KPAA…AKSP), and 121-133 (AAPS…KASA). The segment covering 170-187 (PPSPPARPVPQQPSPPSA) has biased composition (pro residues). Residues 193–206 (APIRRAAPNDAPRP) show a composition bias toward low complexity. Composition is skewed to pro residues over residues 207–217 (ANAPPSRPQPK) and 258–268 (SPRPAVSPRPS). The segment covering 285–304 (RPGAPTRPGTGAGRPSRPGG) has biased composition (low complexity). Positions 320–339 (GNRGEGGRPPGGARPAGGGN) are enriched in gly residues. The span at 388-403 (ATPPVSRPTATPPSPA) shows a compositional bias: pro residues. Residues 412-422 (FRPGAGPGGQR) are compositionally biased toward gly residues. Positions 425-439 (GRPDWDDSAKLDALR) are enriched in basic and acidic residues. Residues 486-499 (PKSQQKAAPKPVAA) show a composition bias toward low complexity. Basic residues predominate over residues 500-512 (MRKRRKETTRQRQ). Residues 615 to 787 (RRPPVVTVMG…LLLVTEVEDL (173 aa)) enclose the tr-type G domain. The segment at 624 to 631 (GHVDHGKT) is G1. 624–631 (GHVDHGKT) serves as a coordination point for GTP. A G2 region spans residues 649–653 (GITQH). Residues 674 to 677 (DTPG) form a G3 region. GTP contacts are provided by residues 674-678 (DTPGH) and 728-731 (NKID). Positions 728–731 (NKID) are G4. A G5 region spans residues 764 to 766 (SAI).

It belongs to the TRAFAC class translation factor GTPase superfamily. Classic translation factor GTPase family. IF-2 subfamily.

The protein resides in the cytoplasm. Functionally, one of the essential components for the initiation of protein synthesis. Protects formylmethionyl-tRNA from spontaneous hydrolysis and promotes its binding to the 30S ribosomal subunits. Also involved in the hydrolysis of GTP during the formation of the 70S ribosomal complex. This is Translation initiation factor IF-2 from Synechococcus sp. (strain WH7803).